A 480-amino-acid chain; its full sequence is Plant UBX domain-containing protein 10 (480 aa).

2 disordered regions span residues 47–78 and 335–383; these read DASSSAVDGGGNNRDHDHNNATVTPDYPPRGI and ADQA…AARV. Positions 330 to 389 form a coiled coil; the sequence is RAALEADQAREQQRQEEKERLEREAAEAERKLKEEEEARERAAREAEERQAARVRMRQEK. Basic and acidic residues predominate over residues 336–383; it reads DQAREQQRQEEKERLEREAAEAERKLKEEEEARERAAREAEERQAARV. Residues 399–477 form the UBX domain; sequence KGPDVTQVLV…GLHPQASLFI (79 aa).

In Arabidopsis thaliana (Mouse-ear cress), this protein is Plant UBX domain-containing protein 10.